A 286-amino-acid polypeptide reads, in one-letter code: Gap junction alpha-6 protein (286 aa).

Over 1 to 23 (MSDWSALHQLLEKVQPYSTAGGK) the chain is Cytoplasmic. A helical membrane pass occupies residues 24–41 (VWIKVLFIFRILLLGTAI). At 42–76 (ESAWSDEQFEFHCNTQQPGCENVCYDQAFPISHVR) the chain is on the extracellular side. Residues 77–99 (LWVLQVIFVSVPTLLHLAHVYYV) traverse the membrane as a helical segment. The Cytoplasmic segment spans residues 100–151 (IRQNEKLKKQEEEELKVAHFNGASGERRLQKHTGKHIKCGSKEHGNRKMRGR). The helical transmembrane segment at 152–174 (LLLTYMASIFFKSVFEVAFLLIQ) threads the bilayer. Residues 175 to 209 (WYLYGFTLSAVYICEQSPCPHRVDCFLSRPTEKTI) lie on the Extracellular side of the membrane. A helical membrane pass occupies residues 210-232 (FILFMLVVSMVSFVLNVIELFYV). Residues 233–286 (LFKAIKNHLGNEKEEVYCNPVELQKPSCVSSSAVLTTICSSDQVVPVGLSSFYM) are Cytoplasmic-facing.

It belongs to the connexin family. Alpha-type (group II) subfamily. In terms of assembly, a connexon is composed of a hexamer of connexins. As to expression, expressed in testis.

The protein resides in the cell membrane. The protein localises to the cell junction. It localises to the gap junction. Functionally, one gap junction consists of a cluster of closely packed pairs of transmembrane channels, the connexons, through which materials of low MW diffuse from one cell to a neighboring cell. This is Gap junction alpha-6 protein (Gja6) from Rattus norvegicus (Rat).